A 172-amino-acid chain; its full sequence is Putative phosphoesterase BCAH820_1309 (172 aa).

H34 (proton donor) is an active-site residue. 2 short sequence motifs (HXTX) span residues 34-37 and 115-118; these read HITL and HLTI. The Proton acceptor role is filled by H115.

It belongs to the 2H phosphoesterase superfamily. YjcG family.

The protein is Putative phosphoesterase BCAH820_1309 of Bacillus cereus (strain AH820).